Reading from the N-terminus, the 393-residue chain is NAD(P)H-quinone oxidoreductase subunit H, chloroplastic (393 aa).

It belongs to the complex I 49 kDa subunit family. NDH is composed of at least 16 different subunits, 5 of which are encoded in the nucleus.

It is found in the plastid. Its subcellular location is the chloroplast thylakoid membrane. It catalyses the reaction a plastoquinone + NADH + (n+1) H(+)(in) = a plastoquinol + NAD(+) + n H(+)(out). It carries out the reaction a plastoquinone + NADPH + (n+1) H(+)(in) = a plastoquinol + NADP(+) + n H(+)(out). Its function is as follows. NDH shuttles electrons from NAD(P)H:plastoquinone, via FMN and iron-sulfur (Fe-S) centers, to quinones in the photosynthetic chain and possibly in a chloroplast respiratory chain. The immediate electron acceptor for the enzyme in this species is believed to be plastoquinone. Couples the redox reaction to proton translocation, and thus conserves the redox energy in a proton gradient. The sequence is that of NAD(P)H-quinone oxidoreductase subunit H, chloroplastic from Huperzia lucidula (Shining clubmoss).